We begin with the raw amino-acid sequence, 159 residues long: Serine-protein kinase RsbW (159 aa).

This sequence belongs to the anti-sigma-factor family.

It carries out the reaction L-seryl-[protein] + ATP = O-phospho-L-seryl-[protein] + ADP + H(+). The catalysed reaction is L-threonyl-[protein] + ATP = O-phospho-L-threonyl-[protein] + ADP + H(+). Negative regulator of sigma-B activity. Phosphorylates and inactivates its specific antagonist protein, RsbV. Upon phosphorylation of RsbV, RsbW is released and binds to sigma-B, thereby blocking its ability to form an RNA polymerase holoenzyme (E-sigma-B). This Staphylococcus aureus protein is Serine-protein kinase RsbW.